The sequence spans 548 residues: WEB family protein At1g12150 (548 aa).

Residues 71–544 adopt a coiled-coil conformation; the sequence is KEFMKIKQKL…ELQRWRQQEN (474 aa). A compositionally biased stretch (basic and acidic residues) spans 430–448; that stretch reads VREEMKMISQKQESKKQDE. Residues 430-455 form a disordered region; it reads VREEMKMISQKQESKKQDEESSGSKI.

This sequence belongs to the WEB family.

The protein is WEB family protein At1g12150 of Arabidopsis thaliana (Mouse-ear cress).